We begin with the raw amino-acid sequence, 464 residues long: MLTKTKSDEIKTQKDSTTGSYWITTFGCQMNKADSERMAGTLEKMGYTRADNELNADLVLYNTCTIRDNAEQKVYSFLGRQAKRKHKTPRLKLVVAGCLAQQEGESLLRRVPELDLVMGPQHVNNLENLLGKVDLGNQVVATEETFISEDITSARRESSICGWVNIIYGCNERCSYCVVPSVRGKEQSRYPNAIKSEIQKLADDNFKEITLLGQNIDAYGRDLPGTTKEGRKENTLTDLLYYIHDVKGIRRIRFATSHPRYFSKRLIQACYELDKVCEHFHIPFQSGNDEILKQMSRGYSIKKYKNIIENIRSLMPDASITADAIVAFPGETEKQYQDTLKLISEIGFDQVNTAAYSARPNTPAAVWTNQLSEEVKKARLQEINDLVEKTARSRNQRYIDNIESVLIEGLNPKNSSQIMGRTRTNRLTFVEIPKNINFNFSLGDEINVRINEARPFSLTGELSL.

Residues 19-135 enclose the MTTase N-terminal domain; that stretch reads GSYWITTFGC…LENLLGKVDL (117 aa). [4Fe-4S] cluster contacts are provided by Cys-28, Cys-64, Cys-98, Cys-170, Cys-174, and Cys-177. The Radical SAM core domain occupies 156–394; the sequence is RESSICGWVN…DLVEKTARSR (239 aa). Residues 396-464 form the TRAM domain; the sequence is QRYIDNIESV…PFSLTGELSL (69 aa).

The protein belongs to the methylthiotransferase family. MiaB subfamily. Monomer. [4Fe-4S] cluster is required as a cofactor.

The protein localises to the cytoplasm. The catalysed reaction is N(6)-dimethylallyladenosine(37) in tRNA + (sulfur carrier)-SH + AH2 + 2 S-adenosyl-L-methionine = 2-methylsulfanyl-N(6)-dimethylallyladenosine(37) in tRNA + (sulfur carrier)-H + 5'-deoxyadenosine + L-methionine + A + S-adenosyl-L-homocysteine + 2 H(+). Its function is as follows. Catalyzes the methylthiolation of N6-(dimethylallyl)adenosine (i(6)A), leading to the formation of 2-methylthio-N6-(dimethylallyl)adenosine (ms(2)i(6)A) at position 37 in tRNAs that read codons beginning with uridine. This chain is tRNA-2-methylthio-N(6)-dimethylallyladenosine synthase, found in Prochlorococcus marinus (strain MIT 9301).